The chain runs to 549 residues: Glucose-6-phosphate isomerase (549 aa).

An N6-acetyllysine mark is found at Lys80, Lys228, and Lys234. The active-site Proton donor is Glu355. Active-site residues include His386 and Lys514.

The protein belongs to the GPI family.

It localises to the cytoplasm. The catalysed reaction is alpha-D-glucose 6-phosphate = beta-D-fructose 6-phosphate. Its pathway is carbohydrate biosynthesis; gluconeogenesis. It functions in the pathway carbohydrate degradation; glycolysis; D-glyceraldehyde 3-phosphate and glycerone phosphate from D-glucose: step 2/4. Its function is as follows. Catalyzes the reversible isomerization of glucose-6-phosphate to fructose-6-phosphate. The protein is Glucose-6-phosphate isomerase of Escherichia fergusonii (strain ATCC 35469 / DSM 13698 / CCUG 18766 / IAM 14443 / JCM 21226 / LMG 7866 / NBRC 102419 / NCTC 12128 / CDC 0568-73).